We begin with the raw amino-acid sequence, 142 residues long: Large ribosomal subunit protein bL17 (142 aa).

This sequence belongs to the bacterial ribosomal protein bL17 family. Part of the 50S ribosomal subunit. Contacts protein L32.

The chain is Large ribosomal subunit protein bL17 from Chlamydia pneumoniae (Chlamydophila pneumoniae).